A 148-amino-acid chain; its full sequence is Cuticle protein CP1499 (148 aa).

In terms of tissue distribution, calcified shell.

This chain is Cuticle protein CP1499, found in Cancer pagurus (Rock crab).